A 230-amino-acid polypeptide reads, in one-letter code: ATP synthase subunit a (230 aa).

Transmembrane regions (helical) follow at residues 17–37, 78–98, 107–127, 165–187, and 198–218; these read LPIT…FIMA, IFPF…IGVI, DLSV…WFGI, LFGN…GFLV, and EAII…AGGI.

This sequence belongs to the ATPase A chain family. As to quaternary structure, F-type ATPases have 2 components, CF(1) - the catalytic core - and CF(0) - the membrane proton channel. CF(1) has five subunits: alpha(3), beta(3), gamma(1), delta(1), epsilon(1). CF(0) has three main subunits: a(1), b(2) and c(9-12). The alpha and beta chains form an alternating ring which encloses part of the gamma chain. CF(1) is attached to CF(0) by a central stalk formed by the gamma and epsilon chains, while a peripheral stalk is formed by the delta and b chains.

The protein localises to the cell inner membrane. Key component of the proton channel; it plays a direct role in the translocation of protons across the membrane. The sequence is that of ATP synthase subunit a from Legionella pneumophila (strain Corby).